The chain runs to 430 residues: MPYIVDVYAREVLDSRGNPTVEVEVYTESGGFGRALVPSGASTGEYEAVELRDGDKDRYLGKGVLTAVNNVNEIIAPELLGFDVTEQVAIDKMLIELDGTENKGKLGANAILGVSIAVARAAADFLQIPLYQYLGGFNSKTLPVPMMNIVNGGEHADNNVDIQEFMIMPVGAPNFREALRMGAQIFHSLKSVLSAKGLNTAVGDEGGFAPNLGSNEEALQTIVEAIEKAGFKPGEEVKLAMDAASSEFYNKEDGKYHLSGEGVVKTSAEMVDWYEDMVSKYPIISIEDGLDENDWEGHKLLTERLGSKVQLVGDDLFVTNTKKLSEGIKNGVGNSILIKVNQIGTLTETFDAIEMAKRAGYTAVISHRSGETEDSTIADIAVATNAGQIKTGAPSRTDRVAKYNQLLRIEDQLAETAQYHGIETFYNLNK.

Q163 provides a ligand contact to (2R)-2-phosphoglycerate. E205 functions as the Proton donor in the catalytic mechanism. 3 residues coordinate Mg(2+): D242, E287, and D314. Positions 339, 368, 369, and 390 each coordinate (2R)-2-phosphoglycerate. K339 functions as the Proton acceptor in the catalytic mechanism.

It belongs to the enolase family. Requires Mg(2+) as cofactor.

The protein localises to the cytoplasm. The protein resides in the secreted. It localises to the cell surface. The enzyme catalyses (2R)-2-phosphoglycerate = phosphoenolpyruvate + H2O. It participates in carbohydrate degradation; glycolysis; pyruvate from D-glyceraldehyde 3-phosphate: step 4/5. In terms of biological role, catalyzes the reversible conversion of 2-phosphoglycerate (2-PG) into phosphoenolpyruvate (PEP). It is essential for the degradation of carbohydrates via glycolysis. This Bacillus pumilus (strain SAFR-032) protein is Enolase.